Consider the following 174-residue polypeptide: Transcriptional repressor NrdR (174 aa).

A zinc finger lies at 3–34 (CPICHFPETDVIDTRKLYEGEVIRRRRKCRAC). Residues 49 to 139 (LMVVKKDGTR…VYRSFADIGK (91 aa)) form the ATP-cone domain. Residues 151-174 (EGTRNGHSSAATTDQGTTDNHSRM) form a disordered region. A compositionally biased stretch (polar residues) spans 155-174 (NGHSSAATTDQGTTDNHSRM).

The protein belongs to the NrdR family. Requires Zn(2+) as cofactor.

Negatively regulates transcription of bacterial ribonucleotide reductase nrd genes and operons by binding to NrdR-boxes. The polypeptide is Transcriptional repressor NrdR (Chloroflexus aggregans (strain MD-66 / DSM 9485)).